Here is a 353-residue protein sequence, read N- to C-terminus: tRNA N6-adenosine threonylcarbamoyltransferase (353 aa).

The Fe cation site is built by histidine 115 and histidine 119. Substrate-binding positions include 138 to 142 (LVSGG), aspartate 171, glycine 184, and asparagine 276. Fe cation is bound at residue aspartate 304.

It belongs to the KAE1 / TsaD family. Requires Fe(2+) as cofactor.

It is found in the cytoplasm. The enzyme catalyses L-threonylcarbamoyladenylate + adenosine(37) in tRNA = N(6)-L-threonylcarbamoyladenosine(37) in tRNA + AMP + H(+). In terms of biological role, required for the formation of a threonylcarbamoyl group on adenosine at position 37 (t(6)A37) in tRNAs that read codons beginning with adenine. Is involved in the transfer of the threonylcarbamoyl moiety of threonylcarbamoyl-AMP (TC-AMP) to the N6 group of A37, together with TsaE and TsaB. TsaD likely plays a direct catalytic role in this reaction. The sequence is that of tRNA N6-adenosine threonylcarbamoyltransferase from Xanthomonas euvesicatoria pv. vesicatoria (strain 85-10) (Xanthomonas campestris pv. vesicatoria).